A 383-amino-acid chain; its full sequence is MIQLPPTPLHDLNPAFHQEFSSMSWSALHAMPSTTSVGPSLKEVNTFSQHKSHSIFHHGAEIEQQNKFRQEKVIISAPLDYLGSLPGKDIRGKLISAFNEWFKIPEEKLEVIKRVVGLLHVASLLYVHEIQHTHFEPSLTKPSKSLYRIDDIQDSSKLRRGLPVAHNIFGVAQTINSANYAYFRAQSELFTLGKPQALDIFTEELLRLHRGQGMDLYWRDSLICPTEEEYLEMVANKTGGLFRLAIKLIQLESENTMDCVPLVDLLGVIFQIRDDYQNLQSDQYAKNKGFGEDITEGKFSYPIIHSIRKDNGNSQLMNILRQKTEDEDVKRYTIQIIESTGSFEYTRQKLISLTAQARALLKSLGVDQSSGLASILEFLELKQ.

Positions 88, 91, and 120 each coordinate isopentenyl diphosphate. Mg(2+)-binding residues include Asp-150 and Asp-154. Dimethylallyl diphosphate is bound at residue Arg-159. Arg-160 is a binding site for isopentenyl diphosphate. Residues Lys-237, Thr-238, and Gln-271 each coordinate dimethylallyl diphosphate. Asp-274 contributes to the Mg(2+) binding site. Dimethylallyl diphosphate contacts are provided by Asn-278, Lys-288, and Lys-298.

Belongs to the FPP/GGPP synthase family. Mg(2+) is required as a cofactor.

The enzyme catalyses isopentenyl diphosphate + dimethylallyl diphosphate = (2E)-geranyl diphosphate + diphosphate. It catalyses the reaction isopentenyl diphosphate + (2E)-geranyl diphosphate = (2E,6E)-farnesyl diphosphate + diphosphate. It carries out the reaction isopentenyl diphosphate + (2E,6E)-farnesyl diphosphate = (2E,6E,10E)-geranylgeranyl diphosphate + diphosphate. The protein operates within secondary metabolite biosynthesis; terpenoid biosynthesis. Its function is as follows. Geranylgeranyl pyrophosphate synthase; part of the cluster that mediates the biosynthesis of shearones, diterpenoid pyrones (DPs) which are structurally diverse meroterpenoids consisting of a diterpene linked by a pyrone, and which may exhibit a range of bioactivities. Within the pathway, esdpD takes part to the biosynthesis of the molecular scaffold by providing geranylgeranyl pyrophosphate (GGPP) to the prenyltransferase esdpC for C-3 geranylgeranylation of the alpha-pyrone. The molecular scaffold is commonly biosynthesized by a series of enzymes including the non-reducing polyketide synthase (NR-PKS) esdpA that generates an alpha-pyrone; the prenyltransferase esdpC that attaches a geranylgeranyl pyrophosphate (GGPP) produced by the GGPP synthase (GGPPS) esdpD onto the pyrone unit; the FAD-dependent monooxygenase esdpE that converts an olefin on the diterpene unit into an epoxide; and the terpene cyclase esdpB that catalyzes the cyclization reactions to give the molecular backbone shearone A. In the modification steps, esdpF oxidizes the hydroxy group to a ketone at C-3 and esdpG then attaches hydroxy groups at both C-11 and C-12. After that, esdpI hydroxylates at C-20 and esdpH hydroxylates at C-6'. The ether bridge is generated by nucleophilic attack of the hydroxy group at C-20 to the carbonyl carbon at C-3. EsdpH can also functions prior to esdpI. The different combinations of these modification enzymes lead to the production of diverse shearone derivatives, shearone I being the end product of the pathway. The alpha-ketoglutarate-dependent dioxygenase esdpJ seems not to be involved in this pathway. The sequence is that of Geranylgeranyl pyrophosphate synthase esdpD from Penicillium shearii (Eupenicillium shearii).